The primary structure comprises 295 residues: Probable cell division protein WhiA (295 aa).

Positions 262 to 293 form a DNA-binding region, H-T-H motif; that stretch reads SLRELGKKLNLTKSQIYSKLKRIIKIAERFGD.

The protein belongs to the WhiA family.

In terms of biological role, involved in cell division and chromosome segregation. The polypeptide is Probable cell division protein WhiA (Thermotoga maritima (strain ATCC 43589 / DSM 3109 / JCM 10099 / NBRC 100826 / MSB8)).